The sequence spans 1888 residues: Fatty acid synthase subunit alpha (1888 aa).

A disordered region spans residues 98-118 (DLAPVEEPNAEEQTGAAATPA). The Carrier domain occupies 146–221 (VKASLLLHVL…ETFQDTFAGS (76 aa)). Serine 181 carries the O-(pantetheine 4'-phosphoryl)serine modification. Positions 675–874 (DKYVLITGAG…CGAIIGWTRG (200 aa)) are beta-ketoacyl reductase. One can recognise a Ketosynthase family 3 (KS3) domain in the interval 1119-1657 (KQMIQEVVIE…QKGAQAVAVH (539 aa)). Catalysis depends on for beta-ketoacyl synthase activity residues cysteine 1305, histidine 1542, and histidine 1583. Residues aspartate 1774, valine 1775, and glutamate 1776 each coordinate Mg(2+). Acetyl-CoA is bound by residues 1774-1776 (DVE), tyrosine 1800, serine 1810, 1819-1829 (EAVFKSLGVKS), 1843-1846 (REAG), and 1873-1875 (ISH). Residues serine 1874 and histidine 1875 each coordinate Mg(2+).

It belongs to the thiolase-like superfamily. Fungal fatty acid synthetase subunit alpha family. As to quaternary structure, fatty acid synthase is composed of alpha and beta subunits.

It carries out the reaction acetyl-CoA + n malonyl-CoA + 2n NADPH + 4n H(+) = a long-chain-acyl-CoA + n CoA + n CO2 + 2n NADP(+).. It catalyses the reaction a fatty acyl-[ACP] + malonyl-[ACP] + H(+) = a 3-oxoacyl-[ACP] + holo-[ACP] + CO2. The catalysed reaction is a (3R)-hydroxyacyl-[ACP] + NADP(+) = a 3-oxoacyl-[ACP] + NADPH + H(+). Fatty acid synthetase catalyzes the formation of long-chain fatty acids from acetyl-CoA, malonyl-CoA and NADPH. The alpha subunit contains domains for: acyl carrier protein, 3-oxoacyl-[acyl-carrier-protein] reductase, and 3-oxoacyl-[acyl-carrier-protein] synthase. In this species, higher amounts of C18 than C16 fatty acids are produced. The polypeptide is Fatty acid synthase subunit alpha (FAS2) (Lachancea kluyveri (Yeast)).